The sequence spans 336 residues: Putative ataxin-3 homolog (336 aa).

Residues 10–193 (GGLLYHEVQE…KECPMATEGS (184 aa)) enclose the Josephin domain. The active-site Nucleophile is the cysteine 23. Residue histidine 132 is the Proton acceptor of the active site. Residue asparagine 147 is part of the active site. The 20-residue stretch at 244 to 263 (QEEADLNAAIAASLMDTGGP) folds into the UIM domain. The interval 281-336 (IESTSGEMSKDGNLEEQGANKSETSEPNSDNIESASGSNPKQNTTSLEGKESIKED) is disordered. Positions 299 to 327 (ANKSETSEPNSDNIESASGSNPKQNTTSL) are enriched in polar residues.

The protein localises to the nucleus. It catalyses the reaction Thiol-dependent hydrolysis of ester, thioester, amide, peptide and isopeptide bonds formed by the C-terminal Gly of ubiquitin (a 76-residue protein attached to proteins as an intracellular targeting signal).. Its function is as follows. Interacts with key regulators of transcription and represses transcription. Acts as a histone-binding protein that regulates transcription. Acts as a deubiquitinating enzyme. The protein is Putative ataxin-3 homolog of Oryza sativa subsp. japonica (Rice).